The primary structure comprises 360 residues: Aminomethyltransferase (360 aa).

This sequence belongs to the GcvT family. The glycine cleavage system is composed of four proteins: P, T, L and H.

The enzyme catalyses N(6)-[(R)-S(8)-aminomethyldihydrolipoyl]-L-lysyl-[protein] + (6S)-5,6,7,8-tetrahydrofolate = N(6)-[(R)-dihydrolipoyl]-L-lysyl-[protein] + (6R)-5,10-methylene-5,6,7,8-tetrahydrofolate + NH4(+). Its function is as follows. The glycine cleavage system catalyzes the degradation of glycine. This Legionella pneumophila (strain Corby) protein is Aminomethyltransferase.